Consider the following 260-residue polypeptide: 5'-nucleotidase SurE (260 aa).

Residues aspartate 8, aspartate 9, serine 39, and asparagine 91 each coordinate a divalent metal cation.

The protein belongs to the SurE nucleotidase family. The cofactor is a divalent metal cation.

It localises to the cytoplasm. It carries out the reaction a ribonucleoside 5'-phosphate + H2O = a ribonucleoside + phosphate. Functionally, nucleotidase that shows phosphatase activity on nucleoside 5'-monophosphates. The sequence is that of 5'-nucleotidase SurE from Acidovorax ebreus (strain TPSY) (Diaphorobacter sp. (strain TPSY)).